The following is an 83-amino-acid chain: Urotensin-2 (83 aa).

The propeptide occupies 49–71; that stretch reads EVLLEKQSLLNPFSRVFGIRKQF. An intrachain disulfide couples cysteine 77 to cysteine 82.

Belongs to the urotensin-2 family.

The protein resides in the secreted. Its function is as follows. Urotensin is found in the teleost caudal neurosecretory system. It has a suggested role in osmoregulation and as a corticotropin-releasing factor. The non-hormonal portion of this precursor may be a urotensin binding protein, urophysin. In Platichthys flesus (European flounder), this protein is Urotensin-2.